Here is a 176-residue protein sequence, read N- to C-terminus: Sec-independent protein translocase protein TatB (176 aa).

Residues 1 to 21 form a helical membrane-spanning segment; it reads MLDLGLSKMALIGVVALVVLG. The interval 155–176 is disordered; it reads QSGAARVARHQPASLRRPTRFL.

This sequence belongs to the TatB family. As to quaternary structure, the Tat system comprises two distinct complexes: a TatABC complex, containing multiple copies of TatA, TatB and TatC subunits, and a separate TatA complex, containing only TatA subunits. Substrates initially bind to the TatABC complex, which probably triggers association of the separate TatA complex to form the active translocon.

It localises to the cell inner membrane. Its function is as follows. Part of the twin-arginine translocation (Tat) system that transports large folded proteins containing a characteristic twin-arginine motif in their signal peptide across membranes. Together with TatC, TatB is part of a receptor directly interacting with Tat signal peptides. TatB may form an oligomeric binding site that transiently accommodates folded Tat precursor proteins before their translocation. The polypeptide is Sec-independent protein translocase protein TatB (Burkholderia ambifaria (strain ATCC BAA-244 / DSM 16087 / CCUG 44356 / LMG 19182 / AMMD) (Burkholderia cepacia (strain AMMD))).